A 523-amino-acid polypeptide reads, in one-letter code: MNAATSITQAPVADVELKQLNEATAQRESATNNPNDSSSIDERPIHSALSESQRSALLAVASFAAAISPASTTTYYPAITTLARDLDVSITQINLSISVYQIFQGLAPTVAAALSDRYGRRPVYLGCLFINIAANLGLARQENYTSLMVLRCLQSSSSSGTVALGQAVMDDLVTSEERGKYMAYLTLGLVMGPALGPLIGGLLSQYLGWRAIFWFLMILGGFFFVLTFTFFRETNRSIVGDGSVPPPKWNRSLVQILRKDKLVPNRESLQKKRIGVNPLASVQILCNKENFIVCMYGALLFGGYASVISIFATQLEERYGYSQVQVGLCYLPFGVGSILSRWTAGKMIDWNFKREAEKQGLKIVKNRQQDLSQYDIEKARLTISFPMIFATCGFVVAYGWLMQYNTHVASVLVIVFLIANVFTGVLIANSALLNDLNPGNGAALGAAMNLTRCLMGAGGVAAVTPLINKIGIGYTATATAGVWLAVLPALYVVYSKGYTWRKAALRSSAQGRGEGSRVASPSP.

Positions Q19–E42 are disordered. Residues N21–S38 show a composition bias toward polar residues. N35, N94, and N143 each carry an N-linked (GlcNAc...) asparagine glycan. 2 helical membrane passes run A183–L203 and A211–F231. N235 and N250 each carry an N-linked (GlcNAc...) asparagine glycan. Helical transmembrane passes span F291–F311, Y319–L339, L381–L401, V408–A428, A443–V463, and I470–L490.

This sequence belongs to the major facilitator superfamily.

The protein resides in the membrane. Its function is as follows. MFS-type transporter; part of the gene cluster that mediates the biosynthesis of squalestatin S1 (SQS1, also known as zaragozic acid A), a heavily oxidized fungal polyketide that offers potent cholesterol lowering activity by targeting squalene synthase (SS). This is MFS-type transporter R5 from Phoma sp. (strain ATCC 20986 / MF5453).